Reading from the N-terminus, the 32-residue chain is Conotoxin pr6d (32 aa).

At Pro5 the chain carries 4-hydroxyproline. 3 disulfides stabilise this stretch: Cys7-Cys20, Cys14-Cys25, and Cys19-Cys30.

As to expression, expressed by the venom duct.

It localises to the secreted. In Conus parius (Cone snail), this protein is Conotoxin pr6d.